Consider the following 134-residue polypeptide: Translation initiation factor 2 subunit beta (134 aa).

The protein belongs to the eIF-2-beta/eIF-5 family. Heterotrimer composed of an alpha, a beta and a gamma chain.

In terms of biological role, eIF-2 functions in the early steps of protein synthesis by forming a ternary complex with GTP and initiator tRNA. This chain is Translation initiation factor 2 subunit beta, found in Pyrobaculum aerophilum (strain ATCC 51768 / DSM 7523 / JCM 9630 / CIP 104966 / NBRC 100827 / IM2).